The chain runs to 804 residues: Phenylalanine--tRNA ligase beta subunit (804 aa).

The 116-residue stretch at 40 to 155 (GEGIKGVVIG…NDAETGSDAL (116 aa)) folds into the tRNA-binding domain. One can recognise a B5 domain in the interval 409 to 484 (IEANNIHVSA…RLYGYDNIPS (76 aa)). Residues Asp-462, Asp-468, Glu-471, and Glu-472 each coordinate Mg(2+). The FDX-ACB domain maps to 710–803 (PKYPSVTRDI…LEDTYQAVLR (94 aa)).

The protein belongs to the phenylalanyl-tRNA synthetase beta subunit family. Type 1 subfamily. Tetramer of two alpha and two beta subunits. It depends on Mg(2+) as a cofactor.

The protein resides in the cytoplasm. The enzyme catalyses tRNA(Phe) + L-phenylalanine + ATP = L-phenylalanyl-tRNA(Phe) + AMP + diphosphate + H(+). The polypeptide is Phenylalanine--tRNA ligase beta subunit (pheT) (Bacillus subtilis (strain 168)).